The sequence spans 402 residues: Serine/threonine transporter SstT (402 aa).

Helical transmembrane passes span Ile-19–Leu-39, Leu-43–Ala-63, Thr-86–Leu-106, Ala-138–Met-158, Val-179–Ile-199, Leu-212–Ile-232, Ile-287–Leu-307, Val-327–Ile-347, and Phe-354–Ile-374.

This sequence belongs to the dicarboxylate/amino acid:cation symporter (DAACS) (TC 2.A.23) family.

The protein resides in the cell membrane. The enzyme catalyses L-serine(in) + Na(+)(in) = L-serine(out) + Na(+)(out). It catalyses the reaction L-threonine(in) + Na(+)(in) = L-threonine(out) + Na(+)(out). Functionally, involved in the import of serine and threonine into the cell, with the concomitant import of sodium (symport system). The polypeptide is Serine/threonine transporter SstT (Streptococcus agalactiae serotype Ia (strain ATCC 27591 / A909 / CDC SS700)).